Here is a 1148-residue protein sequence, read N- to C-terminus: Envelopment polyprotein (1148 aa).

Residues 1-23 (MGELSPVCLCLLLQGLLLCNTGA) form the signal peptide. Residues 24–496 (ARNLNELKME…PGLHGWATML (473 aa)) lie on the Lumenal side of the membrane. 6 cysteine pairs are disulfide-bonded: Cys34–Cys159, Cys68–Cys165, Cys117–Cys136, Cys141–Cys146, Cys183–Cys193, and Cys218–Cys257. An N-linked (GlcNAc...) asparagine; by host glycan is attached at Asn142. Asn357 carries N-linked (GlcNAc...) asparagine; by host glycosylation. 4 disulfide bridges follow: Cys386-Cys445, Cys390-Cys399, Cys415-Cys434, and Cys462-Cys485. N-linked (GlcNAc...) asparagine; by host glycosylation occurs at Asn409. The chain crosses the membrane as a helical span at residues 497–517 (LLLTFCFGWVLIPTITMILLK). The Cytoplasmic portion of the chain corresponds to 518-637 (ILIAFAYLCS…LSLFRYRSRF (120 aa)). A binding to the ribonucleoprotein region spans residues 526-543 (CSKYNTDSKFRILIEKVK). 2 CCHC-type zinc fingers span residues 555-575 (CEVC…RKSC) and 580-601 (CPYC…FKVC). Binding to the ribonucleoprotein stretches follow at residues 598–615 (FKVC…RKSL), 602–613 (KLTSRFQENLRK), and 621–635 (MQGC…RYRS). The ITAM domain occupies 621–644 (MQGCYRTLSLFRYRSRFFVGLVWC). Positions 625–628 (YRTL) match the YxxL motif. The chain crosses the membrane as a helical span at residues 638–658 (FVGLVWCVLLVLELIVWAASA). Over 659 to 1115 (ETQNLNAGWT…WILGVLNGNW (457 aa)) the chain is Lumenal. Cystine bridges form between Cys745–Cys780, Cys749–Cys787, Cys761–Cys894, Cys775–Cys905, Cys790–Cys913, Cys816–Cys825, Cys833–Cys842, and Cys873–Cys877. Positions 767–787 (YEYETGWGCNPPDCPGVGTGC) are fusion loop. N-linked (GlcNAc...) asparagine; by host glycosylation is present at Asn937. 5 disulfide bridges follow: Cys979/Cys1009, Cys1002/Cys1054, Cys1019/Cys1024, Cys1055/Cys1060, and Cys1094/Cys1098. Residues 1116 to 1136 (MVVAVLVVLLILSILLFTLCC) traverse the membrane as a helical segment. Binding to the ribonucleoprotein regions lie at residues 1131–1143 (LFTL…PSYR) and 1131–1148 (LFTL…EHKP). The Cytoplasmic portion of the chain corresponds to 1137–1148 (PRRPSYRKEHKP).

The protein belongs to the hantavirus envelope glycoprotein family. In terms of assembly, homodimer. Homotetramer; forms heterotetrameric Gn-Gc spikes in the pre-fusion conformation. Interacts (via C-terminus) with the nucleoprotein. Interacts with host TUFM; this interaction contributes to the virus-induced degradation of mitochondria by autophagy, which leads to degradation of host MAVS and inhibition of type I interferon (IFN) responses. Interacts with host MAP1LC3B; this interaction contributes to the virus-induced degradation of mitochondria by autophagy, which leads to degradation of host MAVS and inhibition of type I interferon (IFN) responses. As to quaternary structure, homodimer. Homotetramer; forms heterotetrameric Gn-Gc spikes in the pre-fusion conformation. Homotrimer; forms homotrimer in the post-fusion conformation at acidic pH. Interacts (via C-terminus) with the nucleoprotein. Post-translationally, envelope polyprotein precursor is quickly cleaved in vivo just after synthesis, presumably by host signal peptidase.

The protein resides in the virion membrane. It is found in the host cell surface. It localises to the host Golgi apparatus membrane. The protein localises to the host endoplasmic reticulum membrane. Its subcellular location is the host mitochondrion. Forms homotetramers with glycoprotein C at the surface of the virion. Attaches the virion to host cell receptors including integrin ITGAV/ITGB3. This attachment induces virion internalization predominantly through clathrin-dependent endocytosis. Mediates the assembly and budding of infectious virus particles through its interaction with the nucleocapsid protein and the viral genome. May dysregulate normal immune and endothelial cell responses through an ITAM motif. Translocates to mitochondria, binds to host TUFM and recruits MAP1LC3B. These interactions induce mitochondrial autophagy and therefore destruction of host MAVS leading to inhibition of type I interferon (IFN) responses. Concomitant breakdown of glycoprotein N is apparently prevented by the nucleoprotein that may inhibit Gn-stimulated autophagosome-lysosome fusion. Interacts with the viral genomic RNA. Functionally, forms homotetramers with glycoprotein N at the surface of the virion. Attaches the virion to host cell receptors including integrin ITGAV/ITGB3. This attachment induces virion internalization predominantly through clathrin-dependent endocytosis. Class II fusion protein that promotes fusion of viral membrane with host endosomal membrane after endocytosis of the virion. The protein is Envelopment polyprotein (GP) of Homo sapiens (Human).